Consider the following 2671-residue polypeptide: MAADTQVSETLKRFAVKVTTASVKERREILSELGRCIAGKDLPEGAVKGLCKLFCLTLHRYRDAASRRALQAAIQQLAEAQPEATAKNLLHSLQSSGVGSKACVPSKSSGSAALLALTWTCLLVRIVFPLKAKRQGDIWNKLVEVQCLLLLEVLGGSHKHAVDGAVKKLTKLWKENPGLVEQYFSAILSLEPSQNYAAMLGLLVQFCTNHKEMDAVSQHKSTLLEFYVKNILMSKAKPPKYLLDNCAPLLRFMSHSEFKDLILPTIQKSLLRSPENVIETISSLLASVTLDLSQYALDIVKGLANQLKSNSPRLMDEAVLALRNLARQCSDSSATEALTKHLFAILGGSEGKLTIIAQKMSVLSGIGSLSHHVVSGPSGQVLNGCVAELFIPFLQQEVHEGTLVHAVSILALWCNRFTTEVPKKLTDWFKKVFSLKTSTSAVRHAYLQCMLASFRGDTLLQALDFLPLLMQTVEKAASQGTQVPTVTEGVAAALLLSKLSVADAQAEAKLSGFWQLVVDEKRQTFTSEKFLLLASEDALCTVLRLTERLFLDHPHRLTNSKVQQYYRVLVAVLLSRTWHVRRQAQQTVRKLLSSLGGVKLANGLLDELKTVLNSHKVLPLEALVTDAGEVTEMGKTYVPPRVLQEALCVISGVPGLKGDIPSTEQLAQEMLIISHHPSLVAVQSGLWPALLTRMKIDPDAFITRHLDQIIPRITTQSPLNQSSMNAMGSLSVLSPDRVLPQLISTITASVQNPALCLVTREEFSIMQTPAGELFDKSIIQSAQQDSIKKANMKRENKAYSFKEQIIEMELKEEIKKKKGIKEEVQLTSKQKEMLQAQMDKEAQIRRRLQELDGELEAALGLLDAIMARNPCGLIQYIPVLVDAFLPLLKSPLAAPRVKGPFLSLAACVMPPRLKTLGTLVSHVTLRLLKPECALDKSWCQEELPVAVRRAVSLLHTHTIPSRVGKGEPDAAPLSAPAFSLVFPMLKMVLTEMPYHSEEEEEQMAQILQILTVHAQLRASPDTPPERVDENGPELLPRVAMLRLLTWVIGTGSPRLQVLASDTLTALCASSSGEDGCAFAEQEEVDVLLAALQSPCASVRETALRGLMELRLVLPSPDTDEKSGLSLLRRLWVIKFDKEDEIRKLAERLWSTMGLDLQSDLCSLLIDDVIYHEAAVRQAGAEALSQAVARYQRQAAEVMGRLMEIYQEKLYRPPPVLDALGRVISESPPDQWEARCGLALALNKLSQYLDSSQVKPLFQFFVPDALNDRNPDVRKCMLDAALATLNAHGKENVNSLLPVFEEFLKDAPNDASYDAVRQSVVVLMGSLAKHLDKSDPKVKPIVAKLIAALSTPSQQVQESVASCLPPLVPAVKEDAGGMIQRLMQQLLESDKYAERKGAAYGLAGLVKGLGILSLKQQEMMAALTDAIQDKKNFRRREGALFAFEMLCTMLGKLFEPYVVHVLPHLLLCFGDGNQYVREAADDCAKAVMSNLSAHGVKLVLPSLLAALEEESWRTKAGSVELLGAMAYCAPKQLSSCLPNIVPKLTEVLTDSHVKVQKAGQQALRQIGSVIRNPEILAIAPVLLDALTDPSRKTQKCLQTLLDTKFVHFIDAPSLALIMPIVQRAFQDRSTDTRKMAAQIIGNMYSLTDQKDLAPYLPSVTPGLKASLLDPVPEVRTVSAKALGAMVKGMGESCFEDLLPWLMETLTYEQSSVDRSGAAQGLAEVMAGLGVEKLEKLMPEIVATASKVDIAPHVRDGYIMMFNYLPITFGDKFTPYVGPIIPCILKALADENEFVRDTALRAGQRVISMYAETAIALLLPQLEQGLFDDLWRIRFSSVQLLGDLLFHISGVTGKMTTETASEDDNFGTAQSNKAIITALGVDRRNRVLAGLYMGRSDTQLVVRQASLHVWKIVVSNTPRTLREILPTLFGLLLGFLASTCADKRTIAARTLGDLVRKLGEKILPEIIPILEEGLRSQKSDERQGVCIGLSEIMKSTSRDAVLFFSESLVPTARKALCDPLEEVREAAAKTFEQLHSTIGHQALEDILPFLLKQLDDEEVSEFALDGLKQVMAVKSRVVLPYLVPKLTTPPVNTRVLAFLSSVAGDALTRHLGVILPAVMLALKEKLGTPDEQLEMANCQAVILSVEDDTGHRIIIEDLLEATRSPEVGMRQAAAIILNMYCSRSKADYSSHLRSLVSGLIRLFNDSSPVVLEESWDALNAITKKLDAGNQLALIEELHKEIRFIGNECKGEHVPGFCLPKRGVTSILPVLREGVLTGSPEQKEEAAKGLGLVIRLTSADALRPSVVSITGPLIRILGDRFNWTVKAALLETLSLLLGKVGIALKPFLPQLQTTFTKALQDSNRGVRLKAADALGKLISIHVKVDPLFTELLNGIRAVEDPGIRDTMLQALRFVIQGAGSKVDAAIRKNLVSLLLSMLGHDEDNTRISTAGCLGELCAFLTDEELNTVLQQCLLADVSGIDWMVRHGRSLALSVAVNVAPSRLCAGRYSNEVQDMILSNAVADRIPIAMSGIRGMGFLMKYHIETGSGQLPPRLSSLLIKCLQNPCSDIRLVAEKMIWWANKEPRPPLEPQTIKPILKALLDNTKDKNTVVRAYSDQAIVNLLKMRRGEELLQSLSKILDVASLEALNECSRRSLRKLACQADSVEQVDDTILT.

Ala2 carries the N-acetylalanine modification. HEAT repeat units lie at residues 140-178 (NKLV…ENPG), 257-293 (EFKD…LDLS), 294-331 (QYAL…QCSD), 385-423 (CVAE…EVPK), 425-459 (LTDW…GDTL), 460-500 (LQAL…SKLS), 560-597 (SKVQ…SLGG), 599-636 (KLAN…MGKT), 700-732 (AFIT…SLSV), and 733-772 (LSPD…PAGE). Ser729 carries the phosphoserine modification. Ser786 carries the post-translational modification Phosphoserine. The stretch at 804 to 865 (QIIEMELKEE…EAALGLLDAI (62 aa)) forms a coiled coil. HEAT repeat units lie at residues 879-918 (VLVD…TLGT), 979-1016 (SLVF…HAQL), 1035-1072 (LPRV…SSSG), 1078-1115 (FAEQ…VLPS), 1155-1192 (DLQS…RYQR), 1210-1250 (YRPP…YLDS), 1251-1289 (SQVK…AHGK), 1290-1332 (ENVN…HLDK), 1335-1372 (PKVK…AVKE), 1374-1410 (AGGM…GLGI), 1413-1451 (LKQQ…MLGK), 1455-1492 (PYVV…NLSA), 1493-1530 (HGVK…CAPK), 1534-1571 (SCLP…VIRN), 1573-1609 (EILA…HFID), 1611-1648 (PSLA…LTDQ), 1653-1690 (PYLP…GMGE), 1692-1729 (CFED…GLGV), 1731-1769 (KLEK…TFGD), 1773-1810 (PYVG…MYAE), 1812-1848 (AIAL…HISG), 1921-1958 (EILP…KLGE), 1959-1996 (KILP…STSR), 2001-2038 (FFSE…TIGH), 2039-2074 (QALE…VKSR), 2076-2108 (VLPY…LTRH), 2111-2146 (VILP…VEDD), 2147-2184 (TGHR…RSKA), 2188-2225 (SHLR…KLDA), 2259-2296 (RGVT…LTSA), 2301-2338 (PSVV…GKVG), 2339-2380 (IALK…IHVK), 2382-2417 (DPLF…GAGS), 2422-2459 (AIRK…FLTD), 2546-2583 (QLPP…EPRP), 2588-2625 (QTIK…MRRG), and 2627-2661 (ELLQ…QADS). Positions 2260-2408 (GVTSILPVLR…GIRDTMLQAL (149 aa)) are RWDBD region. The residue at position 2276 (Ser2276) is a Phosphoserine.

This sequence belongs to the GCN1 family. As to quaternary structure, interacts with EIF2AK4/GCN2; this interaction stimulates the EIF2AK4/GCN2 kinase activity and is impaired by IMPACT upon a variety of stress conditions, such as amino acid depletion, UV-C irradiation, proteasome inhibitor treatment and glucose deprivation. Interacts with IMPACT; this prevents the interaction of GCN1 with EIF2AK4/GCN2 and inhibits EIF2AK4/GCN2 kinase activity. Interacts with RNF14; interaction takes place following ribosome stalling and promotes recruitment of RNF14. Expressed in the hypothalamus, cortex and hippocampus.

It localises to the cytoplasm. In terms of biological role, ribosome collision sensor that plays a key role in the RNF14-RNF25 translation quality control pathway, a pathway that takes place when a ribosome has stalled during translation, and which promotes ubiquitination and degradation of translation factors on stalled ribosomes. Directly binds to the ribosome and acts as a sentinel for colliding ribosomes: activated following ribosome stalling and promotes recruitment of RNF14, which directly ubiquitinates EEF1A1/eEF1A, leading to its degradation. In addition to EEF1A1/eEF1A, the RNF14-RNF25 translation quality control pathway mediates degradation of ETF1/eRF1 and ubiquitination of ribosomal protein. GCN1 also acts as a positive activator of the integrated stress response (ISR) by mediating activation of EIF2AK4/GCN2 in response to amino acid starvation. Interaction with EIF2AK4/GCN2 on translating ribosomes stimulates EIF2AK4/GCN2 kinase activity, leading to phosphorylation of eukaryotic translation initiation factor 2 (eIF-2-alpha/EIF2S1). EIF2S1/eIF-2-alpha phosphorylation converts EIF2S1/eIF-2-alpha into a global protein synthesis inhibitor, leading to a global attenuation of cap-dependent translation, and thus to a reduced overall utilization of amino acids, while concomitantly initiating the preferential translation of ISR-specific mRNAs, such as the transcriptional activator ATF4, and hence allowing ATF4-mediated reprogramming of amino acid biosynthetic gene expression to alleviate nutrient depletion. This Mus musculus (Mouse) protein is Stalled ribosome sensor GCN1.